The primary structure comprises 750 residues: Photosystem I P700 chlorophyll a apoprotein A1 (750 aa).

Helical transmembrane passes span 70–93 (VFSA…FHGA), 156–179 (LYCT…FHYH), 195–219 (LNHH…HVSL), 291–309 (IAHH…GHMY), 346–369 (WHAQ…HHMY), 385–411 (LSLF…IFMV), 433–455 (AIIS…LYIH), and 531–549 (FLVH…LILL). Residues cysteine 573 and cysteine 582 each contribute to the [4Fe-4S] cluster site. Transmembrane regions (helical) follow at residues 589 to 610 (HVFL…HFSW) and 664 to 686 (LSAY…MFLF). Histidine 675 lines the chlorophyll a' pocket. Chlorophyll a-binding residues include methionine 683 and tyrosine 691. Tryptophan 692 contacts phylloquinone. The chain crosses the membrane as a helical span at residues 724–744 (AVGVTHYLLGGIATTWAFFLA).

This sequence belongs to the PsaA/PsaB family. As to quaternary structure, the PsaA/B heterodimer binds the P700 chlorophyll special pair and subsequent electron acceptors. PSI consists of a core antenna complex that captures photons, and an electron transfer chain that converts photonic excitation into a charge separation. The eukaryotic PSI reaction center is composed of at least 11 subunits. Requires P700 is a chlorophyll a/chlorophyll a' dimer, A0 is one or more chlorophyll a, A1 is one or both phylloquinones and FX is a shared 4Fe-4S iron-sulfur center. as cofactor.

The protein localises to the plastid. Its subcellular location is the chloroplast thylakoid membrane. The enzyme catalyses reduced [plastocyanin] + hnu + oxidized [2Fe-2S]-[ferredoxin] = oxidized [plastocyanin] + reduced [2Fe-2S]-[ferredoxin]. PsaA and PsaB bind P700, the primary electron donor of photosystem I (PSI), as well as the electron acceptors A0, A1 and FX. PSI is a plastocyanin-ferredoxin oxidoreductase, converting photonic excitation into a charge separation, which transfers an electron from the donor P700 chlorophyll pair to the spectroscopically characterized acceptors A0, A1, FX, FA and FB in turn. Oxidized P700 is reduced on the lumenal side of the thylakoid membrane by plastocyanin. This Citrus sinensis (Sweet orange) protein is Photosystem I P700 chlorophyll a apoprotein A1.